Here is a 651-residue protein sequence, read N- to C-terminus: Probable endo-1,3(4)-beta-glucanase NFIA_089530 (651 aa).

The first 21 residues, 1 to 21 (MAPSSLFLSVGSLIASSLVSA), serve as a signal peptide directing secretion. One can recognise a GH16 domain in the interval 36-289 (ESWQGESFIN…WAGNVFAEST (254 aa)). An N-linked (GlcNAc...) asparagine glycan is attached at Asn-64. The active-site Nucleophile is the Glu-145. The active-site Proton donor is Glu-150. Residue Asn-200 is glycosylated (N-linked (GlcNAc...) asparagine). Over residues 364–378 (PVPAETTAVPQPAQT) the composition is skewed to low complexity. Disordered regions lie at residues 364–422 (PVPA…ESTS) and 508–557 (SEIP…PVPA). Composition is skewed to polar residues over residues 379–400 (NTVA…TTVP) and 520–535 (QAVS…TAQG). Residues 542–557 (SIASASAAPSTIPVPA) show a composition bias toward low complexity. The GPI-anchor amidated asparagine moiety is linked to residue Asn-629. Residues 630 to 651 (GANRMSVGLSGLIGVMFIAALA) constitute a propeptide, removed in mature form.

Belongs to the glycosyl hydrolase 16 family.

It is found in the cell membrane. The catalysed reaction is Endohydrolysis of (1-&gt;3)- or (1-&gt;4)-linkages in beta-D-glucans when the glucose residue whose reducing group is involved in the linkage to be hydrolyzed is itself substituted at C-3.. Its function is as follows. Mixed-linked glucanase involved in the degradation of complex natural cellulosic substrates. This chain is Probable endo-1,3(4)-beta-glucanase NFIA_089530, found in Neosartorya fischeri (strain ATCC 1020 / DSM 3700 / CBS 544.65 / FGSC A1164 / JCM 1740 / NRRL 181 / WB 181) (Aspergillus fischerianus).